Reading from the N-terminus, the 98-residue chain is Endoribonuclease antitoxin GhoS (98 aa).

As to quaternary structure, monomer. Post-translationally, unlike other TA antitoxins, this protein is stable.

Functionally, antitoxin component of a type V toxin-antitoxin (TA) system. Neutralizes the toxic effects of toxin GhoT by digesting ghoT transcripts in a sequence-specific manner. In concert with GhoT is involved in reducing cell growth during antibacterial stress. The chain is Endoribonuclease antitoxin GhoS from Escherichia coli O157:H7.